The primary structure comprises 369 residues: S-(hydroxymethyl)glutathione dehydrogenase (369 aa).

Zn(2+) is bound by residues Cys-40, His-62, Cys-92, Cys-95, Cys-98, Cys-106, and Cys-169.

Belongs to the zinc-containing alcohol dehydrogenase family. Class-III subfamily. As to quaternary structure, homodimer. It depends on Zn(2+) as a cofactor.

It localises to the cytoplasm. It carries out the reaction S-(hydroxymethyl)glutathione + NADP(+) = S-formylglutathione + NADPH + H(+). It catalyses the reaction S-(hydroxymethyl)glutathione + NAD(+) = S-formylglutathione + NADH + H(+). The catalysed reaction is a primary alcohol + NAD(+) = an aldehyde + NADH + H(+). The enzyme catalyses a secondary alcohol + NAD(+) = a ketone + NADH + H(+). It carries out the reaction S-nitrosoglutathione + NADH + H(+) = S-(hydroxysulfenamide)glutathione + NAD(+). Its function is as follows. Has high formaldehyde dehydrogenase activity in the presence of glutathione and catalyzes the oxidation of normal alcohols in a reaction that is not GSH-dependent. In addition, hemithiolacetals other than those formed from GSH, including omega-thiol fatty acids, also are substrates. Also acts as a S-nitroso-glutathione reductase by catalyzing the NADH-dependent reduction of S-nitrosoglutathione. The polypeptide is S-(hydroxymethyl)glutathione dehydrogenase (frmA) (Synechocystis sp. (strain ATCC 27184 / PCC 6803 / Kazusa)).